The chain runs to 428 residues: Delta-aminolevulinic acid dehydratase, chloroplastic (428 aa).

Lys-294 serves as the catalytic Schiff-base intermediate with substrate. 5-aminolevulinate-binding residues include Arg-304 and Lys-316. Glu-332 is a binding site for Mg(2+). Residue Lys-347 is the Schiff-base intermediate with substrate of the active site. Residues Ser-373 and Tyr-412 each coordinate 5-aminolevulinate.

Belongs to the ALAD family. In terms of assembly, homooctamer. The cofactor is Mg(2+).

It is found in the plastid. Its subcellular location is the chloroplast. It carries out the reaction 2 5-aminolevulinate = porphobilinogen + 2 H2O + H(+). Its pathway is porphyrin-containing compound metabolism; protoporphyrin-IX biosynthesis; coproporphyrinogen-III from 5-aminolevulinate: step 1/4. Catalyzes an early step in the biosynthesis of tetrapyrroles. Binds two molecules of 5-aminolevulinate per subunit, each at a distinct site, and catalyzes their condensation to form porphobilinogen. This is Delta-aminolevulinic acid dehydratase, chloroplastic (HEMB) from Hordeum vulgare (Barley).